The sequence spans 414 residues: Calcium/calmodulin-dependent protein kinase cmkA (414 aa).

Residues 23 to 278 (YRFGRTLGAG…SEEALKHPWL (256 aa)) enclose the Protein kinase domain. ATP contacts are provided by residues 29–37 (LGAGTYGIV) and Lys-50. Residue Asp-142 is the Proton acceptor of the active site. Residues 278–314 (LKGESASDRDLLPEIRAYIARSRLKRGIEIIKLANRI) are autoinhibitory domain. The interval 293 to 315 (RAYIARSRLKRGIEIIKLANRIE) is calmodulin-binding. Disordered stretches follow at residues 320-375 (QEED…KRSL) and 394-414 (EMKENEEREKVEREARERAHS). Polar residues predominate over residues 351-364 (STENSNTHPASTGN).

Belongs to the protein kinase superfamily. CAMK Ser/Thr protein kinase family. CaMK subfamily. In terms of assembly, monomer. Post-translationally, autophosphorylated in a calcium/calmodulin-dependent manner.

The catalysed reaction is L-seryl-[protein] + ATP = O-phospho-L-seryl-[protein] + ADP + H(+). It carries out the reaction L-threonyl-[protein] + ATP = O-phospho-L-threonyl-[protein] + ADP + H(+). Activated by Ca(2+)/calmodulin. Binding of calmodulin may relieve intrasteric autoinhibition. Calcium/calmodulin-dependent protein kinase. Required in nuclear division cycle for progression from G2 to mitosis. Required for hyphal growth. In Emericella nidulans (strain FGSC A4 / ATCC 38163 / CBS 112.46 / NRRL 194 / M139) (Aspergillus nidulans), this protein is Calcium/calmodulin-dependent protein kinase cmkA (cmkA).